A 469-amino-acid polypeptide reads, in one-letter code: GTPase Der (469 aa).

EngA-type G domains follow at residues 3–167 (PTVA…PDEV) and 175–348 (PKFA…RAAM). GTP-binding positions include 9–16 (GRPNVGKS), 56–60 (DTGGF), 119–122 (NKAE), 181–188 (GRPNVGKS), 228–232 (DTAGV), and 293–296 (NKWD). Residues 349-433 (SKLATPKLTR…PLRVQYKSSE (85 aa)) form the KH-like domain. Residues 429–469 (YKSSENPFDNDEKDKPRAKPKPMSKMRGREKEVRYGKNSKK) are disordered.

It belongs to the TRAFAC class TrmE-Era-EngA-EngB-Septin-like GTPase superfamily. EngA (Der) GTPase family. Associates with the 50S ribosomal subunit.

In terms of biological role, GTPase that plays an essential role in the late steps of ribosome biogenesis. The sequence is that of GTPase Der from Chromobacterium violaceum (strain ATCC 12472 / DSM 30191 / JCM 1249 / CCUG 213 / NBRC 12614 / NCIMB 9131 / NCTC 9757 / MK).